A 154-amino-acid chain; its full sequence is Myoglobin (154 aa).

Residues 2–148 form the Globin domain; it reads GLSDGEWQLV…FRKDMASNYK (147 aa). Residue serine 4 is modified to Phosphoserine. Histidine 65 is a binding site for nitrite. O2 is bound at residue histidine 65. The residue at position 68 (threonine 68) is a Phosphothreonine. Histidine 94 lines the heme b pocket.

This sequence belongs to the globin family. In terms of assembly, monomeric.

Its subcellular location is the cytoplasm. It localises to the sarcoplasm. It catalyses the reaction Fe(III)-heme b-[protein] + nitric oxide + H2O = Fe(II)-heme b-[protein] + nitrite + 2 H(+). The enzyme catalyses H2O2 + AH2 = A + 2 H2O. Monomeric heme protein which primary function is to store oxygen and facilitate its diffusion within muscle tissues. Reversibly binds oxygen through a pentacoordinated heme iron and enables its timely and efficient release as needed during periods of heightened demand. Depending on the oxidative conditions of tissues and cells, and in addition to its ability to bind oxygen, it also has a nitrite reductase activity whereby it regulates the production of bioactive nitric oxide. Under stress conditions, like hypoxia and anoxia, it also protects cells against reactive oxygen species thanks to its pseudoperoxidase activity. This chain is Myoglobin, found in Homo sapiens (Human).